The following is a 422-amino-acid chain: Cytochrome P-450 monooxygenase DoxA (422 aa).

Cysteine 369 is a heme binding site.

This sequence belongs to the cytochrome P450 family. In terms of assembly, monomer. Heme serves as cofactor.

It is found in the cytoplasm. The catalysed reaction is 13-deoxydaunorubicin + NADPH + O2 + H(+) = 13-dihydrodaunorubicin + NADP(+) + H2O. The enzyme catalyses 13-dihydrodaunorubicin + NADPH + O2 + H(+) = daunorubicin + NADP(+) + 2 H2O. It catalyses the reaction 13-deoxycarminomycin + NADPH + O2 + H(+) = 13-dihydrocarminomycin + NADP(+) + H2O. It carries out the reaction 13-dihydrocarminomycin + NADPH + O2 + H(+) = carminomycin + NADP(+) + 2 H2O. It functions in the pathway antibiotic biosynthesis; daunorubicin biosynthesis. It participates in antibiotic biosynthesis; carminomycin biosynthesis. Strongly inhibited by dithiothreitol and high ionic strength buffers. In terms of biological role, involved in the biosynthesis of the anthracyclines carminomycin and daunorubicin (daunomycin) which are aromatic polyketide antibiotics that exhibit high cytotoxicity and are widely applied in the chemotherapy of a variety of cancers. In vivo, DoxA catalyzes the C-13 hydroxylation of 13-deoxycarminomycin and 13-deoxydaunorubicin to yield 13-dihydrocarminomycin and 13-dihydrodaunorubicin, respectively, as well as the oxidation of these 13-dihydro-anthracyclines to their respective 13-keto forms, carminomycin and daunorubicin. In vitro, it also catalyzes the C-14 hydroxylation of daunorubicin to form doxorubicin (adriamycin), although this strain is not a doxorubicin producer. It is not able to accept anthracyclinones (aglycones) and anthracyclines with a 10-carbomethoxyl moiety. 13-oxidation of the anthracyclines possessing the 4-methoxy substitution is greatly favored. The anthracycline analog desacetyladriamycin can be oxidized to 10-hydroxydesacetyladriamycin. It can only use NADP. DoxA acts jointly with DauV. The protein is Cytochrome P-450 monooxygenase DoxA (doxA) of Streptomyces sp. (strain C5).